The sequence spans 276 residues: Undecaprenyl-diphosphatase 1 (276 aa).

8 helical membrane-spanning segments follow: residues 1 to 21 (MSLW…LFPV), 44 to 64 (QLLP…LWYF), 87 to 107 (GHLM…GLLL), 114 to 134 (VFHD…LLWL), 150 to 170 (LTFK…IPGF), 190 to 210 (AAEF…LLEL), 222 to 242 (DALL…RFLM), and 251 to 271 (LASF…WFMF).

The protein belongs to the UppP family.

Its subcellular location is the cell inner membrane. The catalysed reaction is di-trans,octa-cis-undecaprenyl diphosphate + H2O = di-trans,octa-cis-undecaprenyl phosphate + phosphate + H(+). Functionally, catalyzes the dephosphorylation of undecaprenyl diphosphate (UPP). Confers resistance to bacitracin. This Burkholderia pseudomallei (strain 1106a) protein is Undecaprenyl-diphosphatase 1.